A 65-amino-acid chain; its full sequence is Protein YSY6 (65 aa).

A helical membrane pass occupies residues 45–65 (LGILLFLLVGGGVLQLISYIL).

Belongs to the RAMP4 family.

It localises to the membrane. The protein resides in the endoplasmic reticulum membrane. Its function is as follows. Interacts with target proteins during their translocation into the lumen of the endoplasmic reticulum. Protects unfolded target proteins against degradation during ER stress. May facilitate glycosylation of target proteins after termination of ER stress. This is Protein YSY6 (YSY6) from Saccharomyces cerevisiae (strain ATCC 204508 / S288c) (Baker's yeast).